We begin with the raw amino-acid sequence, 649 residues long: Lipoteichoic acid synthase 2 (649 aa).

Over 1 to 9 the chain is Cytoplasmic; that stretch reads MKTFIKERG. Residues 10-30 traverse the membrane as a helical segment; the sequence is LAFFLIAVVLLWIKTYVGYVL. The Extracellular segment spans residues 31 to 42; that stretch reads NFNLGIDNTIQK. A helical membrane pass occupies residues 43-63; sequence ILLFVNPLSSSLFFLGFGLLF. At 64-69 the chain is on the cytoplasmic side; that stretch reads KKKLQQ. Residues 70–90 traverse the membrane as a helical segment; the sequence is TAIIVIHFLMSFLLYANIVYY. Residues 91–118 are Extracellular-facing; sequence RFFNDFITIPVIMQAKTNGGQLGDSAFS. A helical transmembrane segment spans residues 119–139; that stretch reads LMRPTDAFYFIDTIILIILAI. Residues 140-151 are Cytoplasmic-facing; sequence KVNKPAETSSKK. A helical transmembrane segment spans residues 152-172; the sequence is SFRIIFASSILVFLINLAVAE. Over 173 to 649 the chain is Extracellular; sequence SDRPELLTRS…SETSKDNEDK (477 aa). Residues E253 and T297 each contribute to the Mn(2+) site. T297 is an active-site residue. H412 is a binding site for substrate. The Mn(2+) site is built by D471 and H472. The disordered stretch occupies residues 622–649; sequence FKKVNPSDYDYTKHDEDSSETSKDNEDK. The span at 631 to 649 shows a compositional bias: basic and acidic residues; that stretch reads DYTKHDEDSSETSKDNEDK.

It belongs to the LTA synthase family. In terms of processing, proteolytically cleaved.

The protein resides in the cell membrane. Its subcellular location is the secreted. It participates in cell wall biogenesis; lipoteichoic acid biosynthesis. Catalyzes the polymerization of lipoteichoic acid (LTA) polyglycerol phosphate, a reaction that presumably uses phosphatidylglycerol (PG) as substrate. This chain is Lipoteichoic acid synthase 2 (ltaS2), found in Bacillus subtilis (strain 168).